Consider the following 195-residue polypeptide: Imidazoleglycerol-phosphate dehydratase (195 aa).

This sequence belongs to the imidazoleglycerol-phosphate dehydratase family.

Its subcellular location is the cytoplasm. The catalysed reaction is D-erythro-1-(imidazol-4-yl)glycerol 3-phosphate = 3-(imidazol-4-yl)-2-oxopropyl phosphate + H2O. Its pathway is amino-acid biosynthesis; L-histidine biosynthesis; L-histidine from 5-phospho-alpha-D-ribose 1-diphosphate: step 6/9. This chain is Imidazoleglycerol-phosphate dehydratase, found in Campylobacter curvus (strain 525.92).